We begin with the raw amino-acid sequence, 347 residues long: Tetraacyldisaccharide 4'-kinase (347 aa).

54–61 (TVGGAGKT) provides a ligand contact to ATP.

Belongs to the LpxK family.

The enzyme catalyses a lipid A disaccharide + ATP = a lipid IVA + ADP + H(+). Its pathway is glycolipid biosynthesis; lipid IV(A) biosynthesis; lipid IV(A) from (3R)-3-hydroxytetradecanoyl-[acyl-carrier-protein] and UDP-N-acetyl-alpha-D-glucosamine: step 6/6. In terms of biological role, transfers the gamma-phosphate of ATP to the 4'-position of a tetraacyldisaccharide 1-phosphate intermediate (termed DS-1-P) to form tetraacyldisaccharide 1,4'-bis-phosphate (lipid IVA). The protein is Tetraacyldisaccharide 4'-kinase of Rhizobium etli (strain CIAT 652).